We begin with the raw amino-acid sequence, 89 residues long: Small ribosomal subunit protein uS15 (89 aa).

It belongs to the universal ribosomal protein uS15 family. Part of the 30S ribosomal subunit. Forms a bridge to the 50S subunit in the 70S ribosome, contacting the 23S rRNA.

Functionally, one of the primary rRNA binding proteins, it binds directly to 16S rRNA where it helps nucleate assembly of the platform of the 30S subunit by binding and bridging several RNA helices of the 16S rRNA. Forms an intersubunit bridge (bridge B4) with the 23S rRNA of the 50S subunit in the ribosome. In Nitratidesulfovibrio vulgaris (strain DSM 19637 / Miyazaki F) (Desulfovibrio vulgaris), this protein is Small ribosomal subunit protein uS15.